The primary structure comprises 272 residues: MLSVAARSGPFAPYLSAAAHAVPGPLKALAPAALRAEKVVLDLKRPLLCRESMSGRSARRDLVAGISLNAPASVRYVHNDVTVPDFSAYRREDVMDATTSSQTSSEDRKGFSYLVTATACVATAYAAKNVVTQFISSLSASADVLALSKIEIKLSDIPEGKNVAFKWRGKPLFVRHRTQAEINQEAEVDVSKLRDPQHDLDRVKKPEWVILVGVCTHLGCVPIANSGDFGGYYCPCHGSHYDASGRIRKGPAPYNLEVPTYQFVGDDLVVVG.

Residues 77-104 are Mitochondrial matrix-facing; it reads VHNDVTVPDFSAYRREDVMDATTSSQTS. A helical transmembrane segment spans residues 105-138; sequence SEDRKGFSYLVTATACVATAYAAKNVVTQFISSL. Topologically, residues 139 to 272 are mitochondrial intermembrane; that stretch reads SASADVLALS…FVGDDLVVVG (134 aa). The region spanning 185 to 270 is the Rieske domain; it reads EAEVDVSKLR…YQFVGDDLVV (86 aa). [2Fe-2S] cluster-binding residues include C215, H217, L218, C234, H237, and S239. A disulfide bridge connects residues C220 and C236.

It belongs to the Rieske iron-sulfur protein family. In terms of assembly, component of the ubiquinol-cytochrome c oxidoreductase (cytochrome b-c1 complex, complex III, CIII), a multisubunit enzyme composed of 11 subunits. The complex is composed of 3 respiratory subunits cytochrome b, cytochrome c1 and Rieske protein UQCRFS1, 2 core protein subunits UQCRC1/QCR1 and UQCRC2/QCR2, and 6 low-molecular weight protein subunits UQCRH/QCR6, UQCRB/QCR7, UQCRQ/QCR8, UQCR10/QCR9, UQCR11/QCR10 and subunit 9, the cleavage product of Rieske protein UQCRFS1. The complex exists as an obligatory dimer and forms supercomplexes (SCs) in the inner mitochondrial membrane with NADH-ubiquinone oxidoreductase (complex I, CI) and cytochrome c oxidase (complex IV, CIV), resulting in different assemblies (supercomplex SCI(1)III(2)IV(1) and megacomplex MCI(2)III(2)IV(2)). Incorporation of the Rieske protein UQCRFS1 is the penultimate step in complex III assembly. Interacts with TTC19, which is involved in the clearance of UQCRFS1 fragments. As to quaternary structure, component of the ubiquinol-cytochrome c oxidoreductase (cytochrome b-c1 complex, complex III, CIII). Subunit 9 corresponds to the mitochondrial targeting sequence (MTS) of Rieske protein UQCRFS1. It is retained after processing and incorporated inside complex III, where it remains bound to the complex and localizes between the 2 core subunits UQCRC1/QCR1 and UQCRC2/QCR2. [2Fe-2S] cluster is required as a cofactor. Proteolytic processing is necessary for the correct insertion of UQCRFS1 in the complex III dimer. Several fragments are generated during UQCRFS1 insertion, most probably due to the endogenous matrix-processing peptidase (MPP) activity of the 2 core protein subunits UQCRC1/QCR1 and UQCRC2/QCR2, which are homologous to the 2 mitochondrial-processing peptidase (MPP) subunits beta-MPP and alpha-MPP respectively. The action of the protease is also necessary for the clearance of the UQCRFS1 fragments.

It localises to the mitochondrion inner membrane. It carries out the reaction a quinol + 2 Fe(III)-[cytochrome c](out) = a quinone + 2 Fe(II)-[cytochrome c](out) + 2 H(+)(out). Component of the ubiquinol-cytochrome c oxidoreductase, a multisubunit transmembrane complex that is part of the mitochondrial electron transport chain which drives oxidative phosphorylation. The respiratory chain contains 3 multisubunit complexes succinate dehydrogenase (complex II, CII), ubiquinol-cytochrome c oxidoreductase (cytochrome b-c1 complex, complex III, CIII) and cytochrome c oxidase (complex IV, CIV), that cooperate to transfer electrons derived from NADH and succinate to molecular oxygen, creating an electrochemical gradient over the inner membrane that drives transmembrane transport and the ATP synthase. The cytochrome b-c1 complex catalyzes electron transfer from ubiquinol to cytochrome c, linking this redox reaction to translocation of protons across the mitochondrial inner membrane, with protons being carried across the membrane as hydrogens on the quinol. In the process called Q cycle, 2 protons are consumed from the matrix, 4 protons are released into the intermembrane space and 2 electrons are passed to cytochrome c. The Rieske protein is a catalytic core subunit containing a [2Fe-2S] iron-sulfur cluster. It cycles between 2 conformational states during catalysis to transfer electrons from the quinol bound in the Q(0) site in cytochrome b to cytochrome c1. Incorporation of UQCRFS1 is the penultimate step in complex III assembly. In terms of biological role, component of the ubiquinol-cytochrome c oxidoreductase (cytochrome b-c1 complex, complex III, CIII). UQCRFS1 undergoes proteolytic processing once it is incorporated in the complex III dimer. One of the fragments, called subunit 9, corresponds to its mitochondrial targeting sequence (MTS). The proteolytic processing is necessary for the correct insertion of UQCRFS1 in the complex III dimer, but the persistence of UQCRFS1-derived fragments may prevent newly imported UQCRFS1 to be processed and assembled into complex III and is detrimental for the complex III structure and function. In Gallus gallus (Chicken), this protein is Cytochrome b-c1 complex subunit Rieske, mitochondrial (UQCRFS1).